The sequence spans 205 residues: uncharacterized protein (205 aa).

5 consecutive transmembrane segments (helical) span residues 5–25, 41–61, 68–88, 117–137, and 147–167; these read VWLA…SGTV, GAII…GIGI, SALA…WLGI, LINL…PQFI, and FLVL…GYTA.

It belongs to the Rht family.

The protein resides in the cell inner membrane. Its function is as follows. Involved in positive regulation of motility and negative regulation of biofilm formation. This is an uncharacterized protein from Vibrio cholerae serotype O1 (strain ATCC 39315 / El Tor Inaba N16961).